The primary structure comprises 478 residues: Trigger factor (478 aa).

The tract at residues 1 to 41 (MAELADAPDLGSGARKGVRVRLPPPAPHKNGGKNESRGSGQ) is disordered. Positions 197–279 (GDMLVVEYEV…IKEIKKKVLP (83 aa)) constitute a PPIase FKBP-type domain. The span at 455-472 (VEQKQEEEKKEEKEEVKN) shows a compositional bias: basic and acidic residues. Residues 455–478 (VEQKQEEEKKEEKEEVKNESQGNT) are disordered.

The protein belongs to the FKBP-type PPIase family. Tig subfamily.

The protein localises to the cytoplasm. The enzyme catalyses [protein]-peptidylproline (omega=180) = [protein]-peptidylproline (omega=0). Its function is as follows. Involved in protein export. Acts as a chaperone by maintaining the newly synthesized protein in an open conformation. Functions as a peptidyl-prolyl cis-trans isomerase. The protein is Trigger factor of Aquifex aeolicus (strain VF5).